A 338-amino-acid chain; its full sequence is UDP-3-O-acylglucosamine N-acyltransferase (338 aa).

The active-site Proton acceptor is His-239.

The protein belongs to the transferase hexapeptide repeat family. LpxD subfamily. Homotrimer.

The catalysed reaction is a UDP-3-O-[(3R)-3-hydroxyacyl]-alpha-D-glucosamine + a (3R)-hydroxyacyl-[ACP] = a UDP-2-N,3-O-bis[(3R)-3-hydroxyacyl]-alpha-D-glucosamine + holo-[ACP] + H(+). It functions in the pathway bacterial outer membrane biogenesis; LPS lipid A biosynthesis. Catalyzes the N-acylation of UDP-3-O-acylglucosamine using 3-hydroxyacyl-ACP as the acyl donor. Is involved in the biosynthesis of lipid A, a phosphorylated glycolipid that anchors the lipopolysaccharide to the outer membrane of the cell. This chain is UDP-3-O-acylglucosamine N-acyltransferase, found in Xylella fastidiosa (strain 9a5c).